We begin with the raw amino-acid sequence, 227 residues long: MELVFIRHGFSEWNAKNLFTGWRDVNLTERGVEEAKAAGKKLLDKGYEFDIAFTSVLTRAIKTCNIVLEESHQLWIPQVKNWRLNERHYGALQGLDKKATAEQYGDEQVHIWRRSYDISPPDLDPQDPNSAHNDRRYANIPFDVVPNAENLKLTLERALPFWEDQIAPAMLSGKRVLVVAHGNSLRALAKHIIGISDAEIMDFEIPTGQPLVLKLDDKLNYVEHYYL.

Residues 7-14 (RHGFSEWN), 20-21 (TG), Arg59, 86-89 (ERHY), Lys97, 113-114 (RR), and 182-183 (GN) contribute to the substrate site. The active-site Tele-phosphohistidine intermediate is His8. Glu86 (proton donor/acceptor) is an active-site residue.

The protein belongs to the phosphoglycerate mutase family. BPG-dependent PGAM subfamily. Homodimer.

The enzyme catalyses (2R)-2-phosphoglycerate = (2R)-3-phosphoglycerate. It participates in carbohydrate degradation; glycolysis; pyruvate from D-glyceraldehyde 3-phosphate: step 3/5. Its function is as follows. Catalyzes the interconversion of 2-phosphoglycerate and 3-phosphoglycerate. This is 2,3-bisphosphoglycerate-dependent phosphoglycerate mutase from Haemophilus influenzae (strain PittGG).